The following is a 270-amino-acid chain: Putative phosphoenolpyruvate synthase regulatory protein (270 aa).

150–157 (GVSRCGKT) is an ADP binding site.

Belongs to the pyruvate, phosphate/water dikinase regulatory protein family. PSRP subfamily.

The enzyme catalyses [pyruvate, water dikinase] + ADP = [pyruvate, water dikinase]-phosphate + AMP + H(+). The catalysed reaction is [pyruvate, water dikinase]-phosphate + phosphate + H(+) = [pyruvate, water dikinase] + diphosphate. Functionally, bifunctional serine/threonine kinase and phosphorylase involved in the regulation of the phosphoenolpyruvate synthase (PEPS) by catalyzing its phosphorylation/dephosphorylation. This chain is Putative phosphoenolpyruvate synthase regulatory protein, found in Shewanella sp. (strain ANA-3).